A 320-amino-acid polypeptide reads, in one-letter code: Very-long-chain 3-oxoacyl-CoA reductase (320 aa).

A helical membrane pass occupies residues 17 to 37 (FWYLGVVAAVWWGLRAAWCLL). 56 to 85 (GKWAVVTGATDGIGKAYAEELAKRGMNIVL) serves as a coordination point for NADP(+). 2 helical membrane-spanning segments follow: residues 189-209 (GVIL…LTVY) and 283-303 (AIMG…SLGM). Ser-196 provides a ligand contact to substrate. Tyr-209 acts as the Proton acceptor in catalysis.

Belongs to the short-chain dehydrogenases/reductases (SDR) family. 17-beta-HSD 3 subfamily.

It is found in the endoplasmic reticulum membrane. It catalyses the reaction a very-long-chain (3R)-3-hydroxyacyl-CoA + NADP(+) = a very-long-chain 3-oxoacyl-CoA + NADPH + H(+). It carries out the reaction 17beta-estradiol + NAD(+) = estrone + NADH + H(+). The catalysed reaction is 17beta-estradiol + NADP(+) = estrone + NADPH + H(+). The enzyme catalyses 3-oxooctadecanoyl-CoA + NADPH + H(+) = (3R)-hydroxyoctadecanoyl-CoA + NADP(+). It catalyses the reaction (7Z,10Z,13Z,16Z)-3-oxodocosatetraenoyl-CoA + NADPH + H(+) = (3R)-hydroxy-(7Z,10Z,13Z,16Z)-docosatetraenoyl-CoA + NADP(+). It carries out the reaction 3-oxo-(7Z,10Z,13Z,16Z,19Z)-docosapentaenoyl-CoA + NADPH + H(+) = (3R)-hydroxy-(7Z,10Z,13Z,16Z,19Z)-docosapentaenoyl-CoA + NADP(+). The catalysed reaction is (8Z,11Z,14Z)-3-oxoeicosatrienoyl-CoA + NADPH + H(+) = (3R)-hydroxy-(8Z,11Z,14Z)-eicosatrienoyl-CoA + NADP(+). The protein operates within lipid metabolism; fatty acid biosynthesis. It functions in the pathway steroid biosynthesis; estrogen biosynthesis. In terms of biological role, catalyzes the second of the four reactions of the long-chain fatty acids elongation cycle. This endoplasmic reticulum-bound enzymatic process, allows the addition of two carbons to the chain of long- and very long-chain fatty acids/VLCFAs per cycle. This enzyme has a 3-ketoacyl-CoA reductase activity, reducing 3-ketoacyl-CoA to 3-hydroxyacyl-CoA, within each cycle of fatty acid elongation. Thereby, it may participate in the production of VLCFAs of different chain lengths that are involved in multiple biological processes as precursors of membrane lipids and lipid mediators. May also catalyze the transformation of estrone (E1) into estradiol (E2) and play a role in estrogen formation. This chain is Very-long-chain 3-oxoacyl-CoA reductase (hsd17b12), found in Xenopus tropicalis (Western clawed frog).